The following is a 322-amino-acid chain: Quinolinate synthase (322 aa).

Iminosuccinate contacts are provided by H37 and S54. C99 provides a ligand contact to [4Fe-4S] cluster. Iminosuccinate-binding positions include 125–127 (YIN) and S142. C185 is a binding site for [4Fe-4S] cluster. Iminosuccinate contacts are provided by residues 211 to 213 (HPE) and T228. C278 serves as a coordination point for [4Fe-4S] cluster.

It belongs to the quinolinate synthase family. Type 2 subfamily. [4Fe-4S] cluster serves as cofactor.

Its subcellular location is the cytoplasm. It carries out the reaction iminosuccinate + dihydroxyacetone phosphate = quinolinate + phosphate + 2 H2O + H(+). Its pathway is cofactor biosynthesis; NAD(+) biosynthesis; quinolinate from iminoaspartate: step 1/1. Catalyzes the condensation of iminoaspartate with dihydroxyacetone phosphate to form quinolinate. This chain is Quinolinate synthase, found in Chlorobaculum parvum (strain DSM 263 / NCIMB 8327) (Chlorobium vibrioforme subsp. thiosulfatophilum).